Consider the following 344-residue polypeptide: L-rhamnose-proton symporter (344 aa).

10 helical membrane-spanning segments follow: residues 4-24, 38-58, 68-88, 101-121, 137-157, 175-195, 214-234, 259-279, 290-310, and 323-343; these read AITMGIFWHLIGAASAACFYA, WSVGGIVSWIILPWAISALLL, FSLSTLLPVFLFGAMWGIGNI, MGIGIAIGITLIVGTLMTPII, TLLGVLVALIGVGIVTRAGQL, LVLAVMCGIFSAGMSFAMNAA, LPSYVVIMGGGAIINLGFCFI, VLLSALGGLMWYLQFFFYAWG, ISWMLHMSFYVLCGGIVGLVL, and VLSLGCVVIIVAANIVGIGMA.

It belongs to the L-rhamnose transporter (TC 2.A.7.6) family.

Its subcellular location is the cell inner membrane. It catalyses the reaction L-rhamnopyranose(in) + H(+)(in) = L-rhamnopyranose(out) + H(+)(out). Its function is as follows. Uptake of L-rhamnose across the cytoplasmic membrane with the concomitant transport of protons into the cell (symport system). The polypeptide is L-rhamnose-proton symporter (Shigella dysenteriae serotype 1 (strain Sd197)).